The primary structure comprises 212 residues: MITIALPKGALLEDSISIFKKAGLNFSDALLENNRSLTIESECKRAKALLVRNGDVPVYVSYGQADLGIVGYDVLQESELKVAKLLDLEFGGCHMSLAVKNTSNYSKPTDLPANCKVASKFTKTARAYFDDLNIPVEIVHLTGSVELGPITGMAEAIVDLVATGKTLKENGLSKIDDLFYSTARLIANPLSIRLDSNPLRDVILSIESFKGT.

It belongs to the ATP phosphoribosyltransferase family. Short subfamily. In terms of assembly, heteromultimer composed of HisG and HisZ subunits.

The protein localises to the cytoplasm. It carries out the reaction 1-(5-phospho-beta-D-ribosyl)-ATP + diphosphate = 5-phospho-alpha-D-ribose 1-diphosphate + ATP. It participates in amino-acid biosynthesis; L-histidine biosynthesis; L-histidine from 5-phospho-alpha-D-ribose 1-diphosphate: step 1/9. Functionally, catalyzes the condensation of ATP and 5-phosphoribose 1-diphosphate to form N'-(5'-phosphoribosyl)-ATP (PR-ATP). Has a crucial role in the pathway because the rate of histidine biosynthesis seems to be controlled primarily by regulation of HisG enzymatic activity. The chain is ATP phosphoribosyltransferase from Prochlorococcus marinus (strain MIT 9515).